The primary structure comprises 321 residues: Serine/threonine-protein phosphatase 4 catalytic subunit 2 (321 aa).

D64, H66, D92, and N124 together coordinate Mn(2+). The active-site Proton donor is H125. Positions 174 and 249 each coordinate Mn(2+).

The protein belongs to the PPP phosphatase family. PP-4 (PP-X) subfamily. Serine/threonine-protein phosphatase 4 (PP4) occurs in different assemblies of the catalytic and one or more regulatory subunits. Requires Mn(2+) as cofactor.

It catalyses the reaction O-phospho-L-seryl-[protein] + H2O = L-seryl-[protein] + phosphate. It carries out the reaction O-phospho-L-threonyl-[protein] + H2O = L-threonyl-[protein] + phosphate. Protein phosphatase which seems to be involved in larval development but not essential for embryogenesis. In Caenorhabditis elegans, this protein is Serine/threonine-protein phosphatase 4 catalytic subunit 2.